The following is a 409-amino-acid chain: Peptidase T (409 aa).

Histidine 78 lines the Zn(2+) pocket. Aspartate 80 is a catalytic residue. A Zn(2+)-binding site is contributed by aspartate 140. The active-site Proton acceptor is glutamate 174. Zn(2+)-binding residues include glutamate 175, aspartate 197, and histidine 379.

Belongs to the peptidase M20B family. Zn(2+) is required as a cofactor.

Its subcellular location is the cytoplasm. It carries out the reaction Release of the N-terminal residue from a tripeptide.. Its function is as follows. Cleaves the N-terminal amino acid of tripeptides. The sequence is that of Peptidase T from Aliivibrio fischeri (strain ATCC 700601 / ES114) (Vibrio fischeri).